A 251-amino-acid chain; its full sequence is 2,3-bisphosphoglycerate-dependent phosphoglycerate mutase (251 aa).

Substrate is bound by residues 13-20 (RHGESEWN), 26-27 (TG), Arg-65, 92-95 (ERHY), Lys-103, 119-120 (RR), and 186-187 (GN). His-14 (tele-phosphohistidine intermediate) is an active-site residue. Glu-92 acts as the Proton donor/acceptor in catalysis.

This sequence belongs to the phosphoglycerate mutase family. BPG-dependent PGAM subfamily.

The enzyme catalyses (2R)-2-phosphoglycerate = (2R)-3-phosphoglycerate. The protein operates within carbohydrate degradation; glycolysis; pyruvate from D-glyceraldehyde 3-phosphate: step 3/5. Functionally, catalyzes the interconversion of 2-phosphoglycerate and 3-phosphoglycerate. This is 2,3-bisphosphoglycerate-dependent phosphoglycerate mutase from Rhodococcus jostii (strain RHA1).